A 118-amino-acid chain; its full sequence is Large ribosomal subunit protein bL20 (118 aa).

It belongs to the bacterial ribosomal protein bL20 family.

In terms of biological role, binds directly to 23S ribosomal RNA and is necessary for the in vitro assembly process of the 50S ribosomal subunit. It is not involved in the protein synthesizing functions of that subunit. The polypeptide is Large ribosomal subunit protein bL20 (Thermus thermophilus (strain ATCC BAA-163 / DSM 7039 / HB27)).